Here is a 357-residue protein sequence, read N- to C-terminus: O-methyltransferase 1, chloroplastic (357 aa).

The N-terminal 53 residues, 1-53, are a transit peptide targeting the chloroplast; that stretch reads MPVLPWLAAAATTPVRRSPPLPATPRALLRLPASSFPPWSNCAKSGLPPRGPF. The disordered stretch occupies residues 50–71; sequence RGPFATAADTPLGGSLPEPEEE.

Belongs to the methyltransferase superfamily. LCMT family. As to expression, expressed in roots, leaf sheaths, flag leaves and panicles.

It is found in the plastid. Its subcellular location is the chloroplast. The enzyme catalyses N-acetylserotonin + S-adenosyl-L-methionine = melatonin + S-adenosyl-L-homocysteine + H(+). The protein operates within aromatic compound metabolism; melatonin biosynthesis; melatonin from serotonin: step 1/2. Functionally, involved in melatonin biosynthesis. Can function as acetylserotonin O-methyltransferase. Catalyzes the transfer of a methyl group onto N-acetylserotonin, producing melatonin (N-acetyl-5-methoxytryptamine). Involved in the regulation of jasmonate- and brassinosteroid-mediated plant growth and defense responses. This chain is O-methyltransferase 1, chloroplastic, found in Oryza sativa subsp. japonica (Rice).